The primary structure comprises 105 residues: Thioredoxin (105 aa).

The region spanning 2 to 105 is the Thioredoxin domain; it reads VKQIESKSAF…KLEATINELL (104 aa). An N6-acetyllysine modification is found at Lys3. N6-succinyllysine is present on Lys8. Active-site nucleophile residues include Cys32 and Cys35. A disulfide bond links Cys32 and Cys35. An N6-acetyllysine modification is found at Lys39. 2 positions are modified to S-nitrosocysteine: Cys62 and Cys69. At Cys73 the chain carries S-nitrosocysteine; alternate. N6-acetyllysine; alternate is present on Lys94. Lys94 carries the N6-succinyllysine; alternate modification.

It belongs to the thioredoxin family. As to quaternary structure, homodimer; disulfide-linked. Interacts with TXNIP through the redox-active site. Interacts with MAP3K5 and CASP3. Interacts with APEX1; the interaction stimulates the FOS/JUN AP-1 DNA-binding activity in a redox-dependent manner. In terms of processing, in the fully reduced protein, both Cys-69 and Cys-73 are nitrosylated in response to nitric oxide (NO). When two disulfide bonds are present in the protein, only Cys-73 is nitrosylated. Cys-73 can serve as donor for nitrosylation of target proteins.

The protein localises to the nucleus. It localises to the cytoplasm. Its subcellular location is the secreted. Functionally, participates in various redox reactions through the reversible oxidation of its active center dithiol to a disulfide and catalyzes dithiol-disulfide exchange reactions. Plays a role in the reversible S-nitrosylation of cysteine residues in target proteins, and thereby contributes to the response to intracellular nitric oxide. Nitrosylates the active site Cys of CASP3 in response to nitric oxide (NO), and thereby inhibits caspase-3 activity. Induces the FOS/JUN AP-1 DNA binding activity in ionizing radiation (IR) cells through its oxidation/reduction status and stimulates AP-1 transcriptional activity. The sequence is that of Thioredoxin (TXN) from Oryctolagus cuniculus (Rabbit).